Reading from the N-terminus, the 118-residue chain is V-type proton ATPase subunit G 1 (118 aa).

Residue Ala2 is modified to N-acetylalanine.

The protein belongs to the V-ATPase G subunit family. In terms of assembly, V-ATPase is a heteromultimeric enzyme made up of two complexes: the ATP-hydrolytic V1 complex and the proton translocation V0 complex. The V1 complex consists of three catalytic AB heterodimers that form a heterohexamer, three peripheral stalks each consisting of EG heterodimers, one central rotor including subunits D and F, and the regulatory subunits C and H. The proton translocation complex V0 consists of the proton transport subunit a, a ring of proteolipid subunits c9c'', rotary subunit d, subunits e and f, and the accessory subunits ATP6AP1/Ac45 and ATP6AP2/PRR. In terms of tissue distribution, kidney; localizes to early distal nephron, encompassing thick ascending limbs and distal convoluted tubules (at protein level). Ubiquitous.

The protein localises to the apical cell membrane. Its function is as follows. Subunit of the V1 complex of vacuolar(H+)-ATPase (V-ATPase), a multisubunit enzyme composed of a peripheral complex (V1) that hydrolyzes ATP and a membrane integral complex (V0) that translocates protons. V-ATPase is responsible for acidifying and maintaining the pH of intracellular compartments and in some cell types, is targeted to the plasma membrane, where it is responsible for acidifying the extracellular environment. In aerobic conditions, involved in intracellular iron homeostasis, thus triggering the activity of Fe(2+) prolyl hydroxylase (PHD) enzymes, and leading to HIF1A hydroxylation and subsequent proteasomal degradation. The sequence is that of V-type proton ATPase subunit G 1 (ATP6V1G1) from Homo sapiens (Human).